The following is a 287-amino-acid chain: Protease HtpX homolog (287 aa).

The next 2 helical transmembrane spans lie at 5 to 25 (IRTG…GYWI) and 28 to 48 (GAGA…AYWV). His131 lines the Zn(2+) pocket. Residue Glu132 is part of the active site. Residue His135 coordinates Zn(2+). 2 helical membrane-spanning segments follow: residues 146-166 (VTAT…FFGG) and 174-194 (PFAG…ATLV). Zn(2+) is bound at residue Glu203.

Belongs to the peptidase M48B family. Zn(2+) serves as cofactor.

It is found in the cell inner membrane. The polypeptide is Protease HtpX homolog (Acidiphilium cryptum (strain JF-5)).